The primary structure comprises 1854 residues: Dystrophin, isoform D (1854 aa).

Disordered regions lie at residues 1–65 (MTTT…PIYA), 84–161 (GSTT…YEMP), 240–352 (QSPT…MSPA), 516–548 (LKPT…PTPS), 595–650 (TPGG…TSES), 716–740 (VMSK…PSTA), 783–830 (LKLQ…STTP), and 1012–1036 (VSDT…EQSR). Composition is skewed to low complexity over residues 11-37 (QRQQ…QQHQ) and 84-96 (GSTT…LQSS). The span at 143 to 157 (GLSSAQPATSASSGN) shows a compositional bias: polar residues. A compositionally biased stretch (low complexity) spans 276–296 (QQQQQQQQAGINGQINGNGNQ). Composition is skewed to polar residues over residues 331–345 (TLSR…SSAD) and 518–536 (PTST…SNTA). The span at 595-606 (TPGGGVVGGQAA) shows a compositional bias: gly residues. The span at 716-727 (VMSKSNSSLGSV) shows a compositional bias: polar residues. Low complexity-rich tracts occupy residues 728–740 (TTPS…PSTA) and 783–814 (LKLQ…QQIQ). The segment covering 815–830 (NGFASDDNSSSCSTTP) has biased composition (polar residues). Spectrin repeat units follow at residues 936–1069 (EHWN…RLDE) and 1072–1176 (TKMR…VLCQ). Positions 1179-1209 (AQQTHENGDDGRTTSNSGTIGPLPNLGQSVK) are disordered. Positions 1206–1239 (QSVKPPWERATTAANVPYYIDHERETTHWDHPEM) constitute a WW domain. Residues 1464-1520 (KHQAKCNICKEYPIVGFRYRCLKCFNFDMCQKCFFFGRNAKNHKLTHPMHEYCTTTT) form a ZZ-type zinc finger. Zn(2+)-binding residues include Cys-1469, Cys-1472, Cys-1484, Cys-1487, Cys-1493, Cys-1496, His-1506, and His-1510. Position 1564 is a phosphoserine (Ser-1564). Disordered stretches follow at residues 1673–1701 (EQSG…GEQG) and 1744–1854 (DEPN…ELQK). Polar residues-rich tracts occupy residues 1682 to 1694 (NGMQ…MTGL) and 1765 to 1796 (ALNS…QQNG). The segment covering 1815-1826 (QELESINDDLED) has biased composition (acidic residues). Positions 1827–1845 (SSSSNTTNTTTTTTTTATT) are enriched in low complexity.

As to quaternary structure, component of the dystrophin associated protein complex (DAPC). Interacts with Dg, via the Dg WW domain binding sites. During embryogenesis and in third instar larvae, expression is seen in pericardial cells of the dorsal vessel and in the ventral nerve cord. Expression is absent from both the embryonic and larval musculature.

The protein resides in the cell membrane. The protein localises to the sarcolemma. It is found in the cytoplasm. Its subcellular location is the cytoskeleton. Functionally, required for the maintenance of appropriate synaptic retrograde communication and the stabilization of muscle cell architecture or physiology. May play a role in anchoring the cytoskeleton to the plasma membrane. The chain is Dystrophin, isoform D (Dys) from Drosophila melanogaster (Fruit fly).